Consider the following 98-residue polypeptide: Small ribosomal subunit protein bS6 (98 aa).

This sequence belongs to the bacterial ribosomal protein bS6 family.

Its function is as follows. Binds together with bS18 to 16S ribosomal RNA. This chain is Small ribosomal subunit protein bS6, found in Staphylococcus aureus (strain NCTC 8325 / PS 47).